Here is a 224-residue protein sequence, read N- to C-terminus: uncharacterized protein (224 aa).

The segment at 203–224 (ELKKKKKKKIKKPKEIRNQKNV) is disordered. The segment covering 204 to 214 (LKKKKKKKIKK) has biased composition (basic residues). Over residues 215–224 (PKEIRNQKNV) the composition is skewed to basic and acidic residues.

This is an uncharacterized protein from Mycoplasma genitalium (strain ATCC 33530 / DSM 19775 / NCTC 10195 / G37) (Mycoplasmoides genitalium).